Reading from the N-terminus, the 73-residue chain is Translation initiation factor IF-1 (73 aa).

The region spanning 1–73 (MAKKEDTIVL…TKARVVYRHR (73 aa)) is the S1-like domain.

Belongs to the IF-1 family. Component of the 30S ribosomal translation pre-initiation complex which assembles on the 30S ribosome in the order IF-2 and IF-3, IF-1 and N-formylmethionyl-tRNA(fMet); mRNA recruitment can occur at any time during PIC assembly.

Its subcellular location is the cytoplasm. One of the essential components for the initiation of protein synthesis. Stabilizes the binding of IF-2 and IF-3 on the 30S subunit to which N-formylmethionyl-tRNA(fMet) subsequently binds. Helps modulate mRNA selection, yielding the 30S pre-initiation complex (PIC). Upon addition of the 50S ribosomal subunit IF-1, IF-2 and IF-3 are released leaving the mature 70S translation initiation complex. The protein is Translation initiation factor IF-1 of Chlamydia muridarum (strain MoPn / Nigg).